A 533-amino-acid chain; its full sequence is MGETKYIFVTGGVASSLGKGIISSSIGKLLQARGYKVTIQKFDPYINIDPGTLNPYEHGECYVTVDGHEADLDLGHYERFLGIQTTKANNITTGRIYKSVIDKERRGDYLGKTIQVIPHITDEIKRNVKLLGNKYKFDFVITEIGGTVGDIESLPYLESIRQLKWELGQNALCVHLTYVPFLSAAQELKTKPTQHSVKELQSLGVQPDILVLRTEHDLNTNLRKKVALFCNVAENAVVQSIDASTIYEVPLLMQEQGLDETILQKMGLPVGERPPLGPWKDFLNRRANATETVTIAMVGKYVELQDAYKSILESLSQAATYNDRKVKIEYVSSEHLTPDNVDEQLGHVNGVVICPGFGSRGIEGKFVAAKYTREHNIPTFGICLGMQCMAIEFARNVLGYADANSIEMDEKTKHNVIDIMEEQKAITNMGGTMRLGAYECVLKKDSKVYEAYKEEHIQERHRHRYEFNNDYRKQFEEAGMKCVGINPESDLVEIVEIPTLKWYIGTQFHPEYSSTVLHPHPLFVSFIKAAIDK.

The segment at 1–268 is amidoligase domain; the sequence is MGETKYIFVT…DETILQKMGL (268 aa). Ser15 lines the CTP pocket. Position 15 (Ser15) interacts with UTP. 16 to 21 contributes to the ATP binding site; that stretch reads SLGKGI. Residue Tyr56 participates in L-glutamine binding. Asp73 serves as a coordination point for ATP. Mg(2+) contacts are provided by Asp73 and Glu143. Residues 150 to 152, 189 to 194, and Lys225 contribute to the CTP site; these read DIE and KTKPTQ. UTP is bound by residues 189–194 and Lys225; that span reads KTKPTQ. The Glutamine amidotransferase type-1 domain occupies 301–533; sequence YVELQDAYKS…VSFIKAAIDK (233 aa). Residue Gly356 coordinates L-glutamine. Cys383 acts as the Nucleophile; for glutamine hydrolysis in catalysis. L-glutamine-binding positions include 384–387, Glu407, and Arg464; that span reads LGMQ. Catalysis depends on residues His509 and Glu511.

This sequence belongs to the CTP synthase family. In terms of assembly, homotetramer.

The enzyme catalyses UTP + L-glutamine + ATP + H2O = CTP + L-glutamate + ADP + phosphate + 2 H(+). It catalyses the reaction L-glutamine + H2O = L-glutamate + NH4(+). The catalysed reaction is UTP + NH4(+) + ATP = CTP + ADP + phosphate + 2 H(+). Its pathway is pyrimidine metabolism; CTP biosynthesis via de novo pathway; CTP from UDP: step 2/2. Allosterically activated by GTP, when glutamine is the substrate; GTP has no effect on the reaction when ammonia is the substrate. The allosteric effector GTP functions by stabilizing the protein conformation that binds the tetrahedral intermediate(s) formed during glutamine hydrolysis. Inhibited by the product CTP, via allosteric rather than competitive inhibition. In terms of biological role, catalyzes the ATP-dependent amination of UTP to CTP with either L-glutamine or ammonia as the source of nitrogen. Regulates intracellular CTP levels through interactions with the four ribonucleotide triphosphates. The chain is CTP synthase from Bacteroides fragilis (strain YCH46).